The following is a 280-amino-acid chain: Inner kinetochore subunit fta1 (280 aa).

Belongs to the CENP-L/IML3 family. Component of the inner kinetochore constitutive centromere-associated network (CCAN) (also known as central kinetochore Sim4 complex in fission yeast), which is composed of at least cnl2, cnp3, cnp20, fta1, fta2, fta3, fta4, fta6, fta7, mal2, mhf1, mhf2, mis6, mis15, mis17, sim4 and wip1.

The protein localises to the nucleus. It localises to the chromosome. Its subcellular location is the centromere. The protein resides in the kinetochore. Functionally, component of the kinetochore, a multiprotein complex that assembles on centromeric DNA and attaches chromosomes to spindle microtubules, mediating chromosome segregation and sister chromatid segregation during meiosis and mitosis. Component of the inner kinetochore constitutive centromere-associated network (CCAN), which serves as a structural platform for outer kinetochore assembly. This is Inner kinetochore subunit fta1 (fta1) from Schizosaccharomyces pombe (strain 972 / ATCC 24843) (Fission yeast).